Reading from the N-terminus, the 559-residue chain is Phosphoinositide 3-phosphatase (559 aa).

The 422-residue stretch at 120–541 (SWKSFLLENE…SSLRWWSASF (422 aa)) folds into the Myotubularin phosphatase domain. Cys342 acts as the Phosphocysteine intermediate in catalysis.

It belongs to the protein-tyrosine phosphatase family. Non-receptor class myotubularin subfamily.

It localises to the cytoplasm. The catalysed reaction is a 1,2-diacyl-sn-glycero-3-phospho-(1D-myo-inositol-3-phosphate) + H2O = a 1,2-diacyl-sn-glycero-3-phospho-(1D-myo-inositol) + phosphate. In terms of biological role, lipid phosphatase which dephosphorylates phosphatidylinositol 3-monophosphate (PI3P). Involved in the control of PI3P-dependent signaling and in the maintenance of endosomal system integrity. The polypeptide is Phosphoinositide 3-phosphatase (Schizosaccharomyces pombe (strain 972 / ATCC 24843) (Fission yeast)).